Reading from the N-terminus, the 315-residue chain is Olfactory receptor 3A1 (315 aa).

Topologically, residues 1 to 28 (MQPESGANGTVIAEFILLGLLEAPGLQP) are extracellular. Asn8 carries an N-linked (GlcNAc...) asparagine glycan. A helical transmembrane segment spans residues 29–52 (VVFVLFLFAYLVTVRGNLSILAAV). The Cytoplasmic portion of the chain corresponds to 53–60 (LVEPKLHT). The helical transmembrane segment at 61-82 (PMYFFLGNLSVLDVGCISVTVP) threads the bilayer. At 83–103 (SMLSRLLSRKRAVPCGACLTQ) the chain is on the extracellular side. The cysteines at positions 100 and 192 are disulfide-linked. The helical transmembrane segment at 104-123 (LFFFHLFVGVDCFLLTAMAY) threads the bilayer. Residues 124–143 (DRFLAICRPLTYSTRMSQTV) lie on the Cytoplasmic side of the membrane. Residues 144 to 161 (QRMLVAASWACAFTNALT) form a helical membrane-spanning segment. Over 162 to 199 (HTVAMSTLNFCGPNVINHFYCDLPQLFQLSCSSTQLNE) the chain is Extracellular. Residues 200 to 223 (LLLFAVGFIMAGTPMALIVISYIH) traverse the membrane as a helical segment. Residues 224 to 240 (VAAAVLRIRSVEGRKKA) are Cytoplasmic-facing. A helical membrane pass occupies residues 241–264 (FSTCGSHLTVVAIFYGSGIFNYMR). The Extracellular portion of the chain corresponds to 265–275 (LGSTKLSDKDK). The chain crosses the membrane as a helical span at residues 276-295 (AVGIFNTVINPMLNPIIYSF). At 296 to 315 (RNPDVQSAIWRMLTGRRSLA) the chain is on the cytoplasmic side.

The protein belongs to the G-protein coupled receptor 1 family.

The protein resides in the cell membrane. Functionally, odorant receptor. This is Olfactory receptor 3A1 (OR3A1) from Homo sapiens (Human).